The sequence spans 87 residues: KTLLLTLVVVTIICLDFGYTRICFKTPYVKSETCPPGQELCYTKTWCDRFCSIRGKVIELGCTATCPRAEPKEDTTCCSKDNCNPHP.

The signal sequence occupies residues 1–20 (KTLLLTLVVVTIICLDFGYT). 5 disulfides stabilise this stretch: cysteine 23–cysteine 41, cysteine 34–cysteine 62, cysteine 47–cysteine 51, cysteine 66–cysteine 77, and cysteine 78–cysteine 83.

This sequence belongs to the three-finger toxin family. Long-chain subfamily. Type II alpha-neurotoxin sub-subfamily. As to expression, expressed by the venom gland.

It localises to the secreted. Binds with high affinity to muscular (alpha-1/CHRNA1) and neuronal (alpha-7/CHRNA7) nicotinic acetylcholine receptor (nAChR) and inhibits acetylcholine from binding to the receptor, thereby impairing neuromuscular and neuronal transmission. In Laticauda laticaudata (Blue-ringed sea krait), this protein is Long neurotoxin LlLong.